Consider the following 504-residue polypeptide: UDP-N-acetylmuramoylalanine--D-glutamate ligase (504 aa).

Gly-129–Thr-135 lines the ATP pocket.

This sequence belongs to the MurCDEF family.

The protein localises to the cytoplasm. The catalysed reaction is UDP-N-acetyl-alpha-D-muramoyl-L-alanine + D-glutamate + ATP = UDP-N-acetyl-alpha-D-muramoyl-L-alanyl-D-glutamate + ADP + phosphate + H(+). The protein operates within cell wall biogenesis; peptidoglycan biosynthesis. In terms of biological role, cell wall formation. Catalyzes the addition of glutamate to the nucleotide precursor UDP-N-acetylmuramoyl-L-alanine (UMA). In Burkholderia mallei (strain ATCC 23344), this protein is UDP-N-acetylmuramoylalanine--D-glutamate ligase.